Reading from the N-terminus, the 2549-residue chain is MLGTGPAVATASAATSSNVSVLQQFASGLKSRNEETRAKAAKELQHYVTMELREMSQEESTRFYDQLNHHIFELVSSSDANERKGGILAIASLIGVEGGNSTRIGRFANYLRNLLPSSDPVVMEMASKAIGRLAMAGDTFTAEYVEFEVKRALEWLGADRNEGRRHAAVLVLRELAISVPTFFFQQVQPFFDNIFVAVWDPKQAIREGAVAALRACLILTTQREPKEMQKPQWYRHTFEEAEKGFDETLAKEKGMNRDDRIHGALLILNELVRISSMEGERLREEMEEITQQQLVHDKYCKDLMGFGTKPRHITPFTSFQAVQPQQPNALVGLLGYSSPQGLMGFGTSPSPAKSTLVESRCCRDLMEEKFDQVCQWVLKCRSSKNSLIQMTILNLLPRLAAFRPSAFTDTQYLQDTMNHVLSCVKKEKERTAAFQALGLLSVAVRSEFKVYLPRVLDIIRAALPPKDFAHKRQKTVQVDATVFTCISMLARAMGPGIQQDIKELLEPMLAVGLSPALTAVLYDLSRQIPQLKKDIQDGLLKMLSLVLMHKPLRHPGMPKGLAHQLASPGLTTLPEASDVASITLALRTLGSFEFEGHSLTQFVRHCADHFLNSEHKEIRMEAARTCSRLLTPSIHLISGHAHVVSQTAVQVVADVLSKLLVVGITDPDPDIRYCVLASLDERFDAHLAQAENLQALFVALNDQVFEIRELAICTVGRLSSMNPAFVMPFLRKMLIQILTELEHSGIGRIKEQSARMLGHLVSNAPRLIRPYMEPILKALILKLKDPDPDPNPGVINNVLATIGELAQVSGLEMRKWVDELFIIIMDMLQDSSLLAKRQVALWTLGQLVASTGYVVEPYRKYPTLLEVLLNFLKTEQNQGTRREAIRVLGLLGALDPYKHKVNIGMIDQSRDASAVSLSESKSSQDSSDYSTSEMLVNMGNLPLDEFYPAVSMVALMRIFRDQSLSHHHTMVVQAITFIFKSLGLKCVQFLPQVMPTFLNVIRVCDGAIREFLFQQLGMLVSFVKSHIRPYMDEIVTLMREFWVMNTSIQSTIILLIEQIVVALGGEFKLYLPQLIPHMLRVFMHDNSQGRIVSIKLLAAIQLFGANLDDYLHLLLPPIVKLFDAPEVPLPSRKAALETVDRLTESLDFTDYASRIIHPIVRTLDQSPELRSTAMDTLSSLVFQLGKKYQIFIPMVNKVLVRHRINHQRYDVLICRIVKGYTLADEEEDPLIYQHRMLRSSQGDALASGPVETGPMKKLHVSTINLQKAWGAARRVSKDDWLEWLRRLSLELLKDSSSPSLRSCWALAQAYNPMARDLFNAAFVSCWSELNEDQQDELIRSIELALTSQDIAEVTQTLLNLAEFMEHSDKGPLPLRDDNGIVLLGERAAKCRAYAKALHYKELEFQKGPTPAILESLISINNKLQQPEAASGVLEYAMKHFGELEIQATWYEKLHEWEDALVAYDKKMDTNKEDPELMLGRMRCLEALGEWGQLHQQCCEKWTLVNDETQAKMARMAAAAAWGLGQWDSMEEYTCMIPRDTHDGAFYRAVLALHQDLFSLAQQCIDKARDLLDAELTAMAGESYSRAYGAMVSCHMLSELEEVIQYKLVPERREIIRQIWWERLQGCQRIVEDWQKILMVRSLVVSPHEDMRTWLKYASLCGKSGRLALAHKTLVLLLGVDPSRQLDHPLPTAHPQVTYAYMKNMWKSARKIDAFQHMQHFVQTMQQQAQHAIATEDQQHKQELHKLMARCFLKLGEWQLNLQGINESTIPKVLQYYSAATEHDRSWYKAWHAWAVMNFEAVLHYKHQNQARDEKKKLRHASGANITNATTAATTAASAAAATSTEGSNSESEAESNENSPTPSPLQKKVTEDLSKTLLLYTVPAVQGFFRSISLSRGNNLQDTLRVLTLWFDYGHWPDVNEALVEGVKAIQIDTWLQVIPQLIARIDTPRPLVGRLIHQLLTDIGRYHPQALIYPLTVASKSTTTARHNAANKILKNMCEHSNTLVQQAMMVSEELIRVAILWHEMWHEGLEEASRLYFGERNVKGMFEVLEPLHAMMERGPQTLKETSFNQAYGRDLMEAQEWCRKYMKSGNVKDLTQAWDLYYHVFRRISKQLPQLTSLELQYVSPKLLMCRDLELAVPGTYDPNQPIIRIQSIAPSLQVITSKQRPRKLTLMGSNGHEFVFLLKGHEDLRQDERVMQLFGLVNTLLANDPTSLRKNLSIQRYAVIPLSTNSGLIGWVPHCDTLHALIRDYREKKKILLNIEHRIMLRMAPDYDHLTLMQKVEVFEHAVNNTAGDDLAKLLWLKSPSSEVWFDRRTNYTRSLAVMSMVGYILGLGDRHPSNLMLDRLSGKILHIDFGDCFEVAMTREKFPEKIPFRLTRMLTNAMEVTGLDGNYRTTCHTVMEVLREHKDSVMAVLEAFVYDPLLNWRLMDTNTKGNKRSRTRTDSYSAGQSVEILDGVELGEPAHKKAGTTVPESIHSFIGDGLVKPEALNKKAIQIINRVRDKLTGRDFSHDDTLDVPTQVELLIKQATSHENLCQCYIGWCPFW.

M1 carries the post-translational modification N-acetylmethionine. Residues 1–651 (MLGTGPAVAT…HVVSQTAVQV (651 aa)) are interaction with NBN. HEAT repeat units lie at residues 16–53 (SSNVSVLQQFASGLKSRNEETRAKAAKELQHYVTMELR), 55–99 (MSQE…VEGG), 100–137 (NSTRIGRFANYLRNLLPSSDPVVMEMASKAIGRLAMAG), 138–179 (DTFT…AISV), 180–220 (PTFF…LILT), 222–276 (QREP…RISS), 277–313 (MEGERLREEMEEITQQQLVHDKYCKDLMGFGTKPRHI), 314–364 (TPFT…CCRD), 365–409 (LMEE…AFTD), 410–445 (TQYLQDTMNHVLSCVKKEKERTAAFQALGLLSVAVR), 446–494 (SEFK…RAMG), 495–529 (PGIQQDIKELLEPMLAVGLSPALTAVLYDLSRQIP), 530–563 (QLKKDIQDGLLKMLSLVLMHKPLRHPGMPKGLAH), 564–596 (QLASPGLTTLPEASDVASITLALRTLGSFEFEG), 597–636 (HSLTQFVRHCADHFLNSEHKEIRMEAARTCSRLLTPSIHL), 637–683 (ISGH…DERF), 686–724 (HLAQAENLQALFVALNDQVFEIRELAICTVGRLSSMNPA), 727–766 (MPFLRKMLIQILTELEHSGIGRIKEQSARMLGHLVSNAPR), 769–811 (RPYM…VSGL), 814–853 (RKWVDELFIIIMDMLQDSSLLAKRQVALWTLGQLVASTGY), 857–893 (PYRKYPTLLEVLLNFLKTEQNQGTRREAIRVLGLLGA), 894–942 (LDPY…GNLP), 943–988 (LDEF…KCVQ), 989–1027 (FLPQVMPTFLNVIRVCDGAIREFLFQQLGMLVSFVKSHI), 1029–1068 (PYMDEIVTLMREFWVMNTSIQSTIILLIEQIVVALGGEFK), 1069–1105 (LYLPQLIPHMLRVFMHDNSQGRIVSIKLLAAIQLFGA), 1106–1144 (NLDDYLHLLLPPIVKLFDAPEVPLPSRKAALETVDRLTE), 1145–1188 (SLDF…GKKY), 1189–1225 (QIFIPMVNKVLVRHRINHQRYDVLICRIVKGYTLADE), 1226–1273 (EEDP…GAAR), 1274–1311 (RVSKDDWLEWLRRLSLELLKDSSSPSLRSCWALAQAYN), and 1312–1345 (PMARDLFNAAFVSCWSELNEDQQDELIRSIELAL). S567 is subject to Phosphoserine. A Phosphothreonine modification is found at T1162. K1218 is modified (N6-acetyllysine). At S1261 the chain carries Phosphoserine. 16 TPR repeats span residues 1346–1382 (TSQDIAEVTQTLLNLAEFMEHSDKGPLPLRDDNGIVL), 1383–1408 (LGERAAKCRAYAKALHYKELEFQKGP), 1409–1442 (TPAILESLISINNKLQQPEAASGVLEYAMKHFGE), 1443–1473 (LEIQATWYEKLHEWEDALVAYDKKMDTNKED), 1474–1507 (PELMLGRMRCLEALGEWGQLHQQCCEKWTLVNDE), 1508–1541 (TQAKMARMAAAAAWGLGQWDSMEEYTCMIPRDTH), 1542–1574 (DGAFYRAVLALHQDLFSLAQQCIDKARDLLDAE), 1575–1614 (LTAMAGESYSRAYGAMVSCHMLSELEEVIQYKLVPERREI), 1615–1649 (IRQIWWERLQGCQRIVEDWQKILMVRSLVVSPHED), 1650–1693 (MRTW…PTAH), 1694–1731 (PQVTYAYMKNMWKSARKIDAFQHMQHFVQTMQQQAQHA), 1732–1786 (IATE…DRSW), 1787–1846 (YKAW…STEG), 1898–1930 (NNLQDTLRVLTLWFDYGHWPDVNEALVEGVKAI), 1931–1970 (QIDTWLQVIPQLIARIDTPRPLVGRLIHQLLTDIGRYHPQ), and 1971–2005 (ALIYPLTVASKSTTTARHNAANKILKNMCEHSNTL). One can recognise an FAT domain in the interval 1382–1982 (LLGERAAKCR…IYPLTVASKS (601 aa)). Residues K1662, K1702, and R1749 each contribute to the 1D-myo-inositol hexakisphosphate site. The segment covering 1825-1860 (ITNATTAATTAASAAAATSTEGSNSESEAESNENSP) has biased composition (low complexity). Residues 1825 to 1867 (ITNATTAATTAASAAAATSTEGSNSESEAESNENSPTPSPLQK) are disordered. Positions 2012-2144 (VSEELIRVAI…DLELAVPGTY (133 aa)) are sufficient for interaction with the FKBP1A/rapamycin complex. K2066 is covalently cross-linked (Glycyl lysine isopeptide (Lys-Gly) (interchain with G-Cter in ubiquitin)). A PI3K/PI4K catalytic domain is found at 2156–2469 (IAPSLQVITS…GVELGEPAHK (314 aa)). The residue at position 2159 (S2159) is a Phosphoserine; by TBK1. The interval 2162-2168 (VITSKQR) is G-loop. T2164 is modified (phosphothreonine). S2165 and Q2167 together coordinate ATP. T2173 is subject to Phosphothreonine; by PKB/AKT1. The ATP site is built by L2185, K2187, E2190, Y2225, G2238, W2239, V2240, and T2245. The interval 2258–2296 (KILLNIEHRIMLRMAPDYDHLTLMQKVEVFEHAVNNTAG) is interaction with MLST8. Residues 2335-2343 (GLGDRHPSN) form a catalytic loop region. N2343 is a binding site for Mg(2+). Positions 2345 and 2356 each coordinate ATP. Positions 2355-2380 (HIDFGDCFEVAMTREKFPEKIPFRLT) are activation loop. D2357 serves as a coordination point for Mg(2+). T2446 bears the Phosphothreonine; by RPS6KB1 mark. S2448 is modified (phosphoserine; by RPS6KB1). 2 positions are modified to phosphoserine: S2478 and S2481. One can recognise an FATC domain in the interval 2517–2549 (DTLDVPTQVELLIKQATSHENLCQCYIGWCPFW).

This sequence belongs to the PI3/PI4-kinase family. As to quaternary structure, part of the mechanistic target of rapamycin complex 1 (mTORC1) which contains MTOR, MLST8 and RPTOR. The mTORC1 complex is a 1 Md obligate dimer of two stoichiometric heterotetramers with overall dimensions of 290 A x 210 A x 135 A. It has a rhomboid shape and a central cavity, the dimeric interfaces are formed by interlocking interactions between the two MTOR and the two RPTOR subunits. The MLST8 subunit forms distal foot-like protuberances, and contacts only one MTOR within the complex, while the small AKT1S1/PRAS40 localizes to the midsection of the central core, in close proximity to RPTOR. mTORC1 associates with AKT1S1/PRAS40, which inhibits its activity by blocking MTOR substrate-recruitment site. Component of the mechanistic target of rapamycin complex 2 (mTORC2), consisting in two heterotretramers composed of MTOR, MLST8, RICTOR and MAPKAP1/SIN1. Interacts with PLPP7 and PML. Interacts with PRR5 and RICTOR; the interaction is direct within the mTORC2 complex and interaction with RICTOR is enhanced by deubiquitination of RICTOR by USP9X. mTORC1 and mTORC2 associate with DEPTOR, which regulates their activity. Interacts with WAC; WAC positively regulates MTOR activity by promoting the assembly of the TTT complex composed of TELO2, TTI1 and TTI2 and the RUVBL complex composed of RUVBL1 and RUVBL2 into the TTT-RUVBL complex which leads to the dimerization of the mTORC1 complex and its subsequent activation. Interacts with UBQLN1. Interacts with TTI1 and TELO2. Interacts with CLIP1; phosphorylates and regulates CLIP1. Interacts with NBN. Interacts with HTR6. Interacts with BRAT1. Interacts with MEAK7 (via C-terminal domain); the interaction increases upon nutrient stimulation. Interacts with TM4SF5; the interaction is positively regulated by arginine and is negatively regulated by leucine. Interacts with GPR137B. Interacts with NCKAP1L. Interacts with TPCN1 and TPCN2; the interaction is required for TPCN1 and TPCN2 sensitivity to ATP. Interacts with ATP6V1A and with CRYAB, forming a ternary complex. Interacts with SLC38A7; this interaction mediates the recruitment of mTORC1 to the lysosome and its subsequent activation. Interacts with TSPAN8. Post-translationally, autophosphorylates when part of mTORC1 or mTORC2. Phosphorylation at Ser-1261, Ser-2159 and Thr-2164 promotes autophosphorylation. Phosphorylated at Ser-2448 by RPS6KB1. Phosphorylation in the kinase domain modulates the interactions of MTOR with RPTOR and AKT1S1/PRAS40 and leads to increased intrinsic mTORC1 kinase activity. Phosphorylation at Ser-2159 by TBK1 in response to growth factors and pathogen recognition receptors promotes mTORC1 activity. Phosphorylation at Ser-2159 by TBK1 in response to EGF growth factor promotes mTORC2 activity, leading to AKT1 phosphorylation and activation. Phosphorylation at Thr-2173 in the ATP-binding region by AKT1 strongly reduces kinase activity. Ubiquitinated at Lys-2066 by the SCF(FBXO22) complex via 'Lys-27'-linked ubiquitination prevents mTORC1 substrate recruitment.

Its subcellular location is the lysosome membrane. The protein localises to the endoplasmic reticulum membrane. It is found in the golgi apparatus membrane. The protein resides in the cell membrane. It localises to the mitochondrion outer membrane. Its subcellular location is the cytoplasm. The protein localises to the nucleus. It is found in the PML body. The protein resides in the microsome membrane. It localises to the cytoplasmic vesicle. Its subcellular location is the phagosome. The catalysed reaction is L-seryl-[protein] + ATP = O-phospho-L-seryl-[protein] + ADP + H(+). It carries out the reaction L-threonyl-[protein] + ATP = O-phospho-L-threonyl-[protein] + ADP + H(+). The enzyme catalyses L-tyrosyl-[protein] + ATP = O-phospho-L-tyrosyl-[protein] + ADP + H(+). Its activity is regulated as follows. The mTORC1 complex is activated in response to nutrients, growth factors or amino acids: activation requires relocalization of the mTORC1 complex to lysosomes that is mediated by the Ragulator complex, SLC38A9, and the Rag GTPases RagA/RRAGA, RagB/RRAGB, RagC/RRAGC and RagD/RRAGD. Activation of mTORC1 by growth factors such as insulin involves AKT1-mediated phosphorylation of TSC1-TSC2, which leads to the activation of the RHEB GTPase a potent activator of the protein kinase activity of mTORC1. Insulin-stimulated and amino acid-dependent phosphorylation at Ser-1261 promotes autophosphorylation and the activation of mTORC1. On the other hand, low cellular energy levels can inhibit mTORC1 through activation of PRKAA1 while hypoxia inhibits mTORC1 through a REDD1-dependent mechanism which may also require PRKAA1. The kinase activity of MTOR within the mTORC1 complex is positively regulated by MLST8. The kinase activity of MTOR is inhibited by DEPTOR and AKT1S1. The non-canonical mTORC1 complex is independent of the RHEB GTPase and specifically mediates phosphorylation of MiT/TFE factors TFEB and TFE3 but not other mTORC1 substrates: it is activated by FLCN, which activates Rag GTPases RagC/RRAGC and RagD/RRAGD. MTOR is the target of the immunosuppressive and anti-cancer drug rapamycin which acts in complex with FKBP1A/FKBP12, and specifically inhibits its kinase activity. mTORC2 is also activated by growth factors, but seems to be nutrient-insensitive. mTORC2 associates and is directly activated by ribosomes. mTORC2 may also be regulated by RHEB but in an indirect manner through the PI3K signaling pathway. Serine/threonine protein kinase which is a central regulator of cellular metabolism, growth and survival in response to hormones, growth factors, nutrients, energy and stress signals. MTOR directly or indirectly regulates the phosphorylation of at least 800 proteins. Functions as part of 2 structurally and functionally distinct signaling complexes mTORC1 and mTORC2 (mTOR complex 1 and 2). In response to nutrients, growth factors or amino acids, mTORC1 is recruited to the lysosome membrane and promotes protein, lipid and nucleotide synthesis by phosphorylating key regulators of mRNA translation and ribosome synthesis. This includes phosphorylation of EIF4EBP1 and release of its inhibition toward the elongation initiation factor 4E (eiF4E). Moreover, phosphorylates and activates RPS6KB1 and RPS6KB2 that promote protein synthesis by modulating the activity of their downstream targets including ribosomal protein S6, eukaryotic translation initiation factor EIF4B, and the inhibitor of translation initiation PDCD4. Stimulates the pyrimidine biosynthesis pathway, both by acute regulation through RPS6KB1-mediated phosphorylation of the biosynthetic enzyme CAD, and delayed regulation, through transcriptional enhancement of the pentose phosphate pathway which produces 5-phosphoribosyl-1-pyrophosphate (PRPP), an allosteric activator of CAD at a later step in synthesis, this function is dependent on the mTORC1 complex. Regulates ribosome synthesis by activating RNA polymerase III-dependent transcription through phosphorylation and inhibition of MAF1 an RNA polymerase III-repressor. Activates dormant ribosomes by mediating phosphorylation of SERBP1, leading to SERBP1 inactivation and reactivation of translation. In parallel to protein synthesis, also regulates lipid synthesis through SREBF1/SREBP1 and LPIN1. To maintain energy homeostasis mTORC1 may also regulate mitochondrial biogenesis through regulation of PPARGC1A. In the same time, mTORC1 inhibits catabolic pathways: negatively regulates autophagy through phosphorylation of ULK1. Under nutrient sufficiency, phosphorylates ULK1 at 'Ser-758', disrupting the interaction with AMPK and preventing activation of ULK1. Also prevents autophagy through phosphorylation of the autophagy inhibitor DAP. Also prevents autophagy by phosphorylating RUBCNL/Pacer under nutrient-rich conditions. Prevents autophagy by mediating phosphorylation of AMBRA1, thereby inhibiting AMBRA1 ability to mediate ubiquitination of ULK1 and interaction between AMBRA1 and PPP2CA. mTORC1 exerts a feedback control on upstream growth factor signaling that includes phosphorylation and activation of GRB10 a INSR-dependent signaling suppressor. Among other potential targets mTORC1 may phosphorylate CLIP1 and regulate microtubules. The mTORC1 complex is inhibited in response to starvation and amino acid depletion. The non-canonical mTORC1 complex, which acts independently of RHEB, specifically mediates phosphorylation of MiT/TFE factors TFEB and TFE3 in the presence of nutrients, promoting their cytosolic retention and inactivation. Upon starvation or lysosomal stress, inhibition of mTORC1 induces dephosphorylation and nuclear translocation of TFEB and TFE3, promoting their transcription factor activity. The mTORC1 complex regulates pyroptosis in macrophages by promoting GSDMD oligomerization. MTOR phosphorylates RPTOR which in turn inhibits mTORC1. As part of the mTORC2 complex, MTOR transduces signals from growth factors to pathways involved in proliferation, cytoskeletal organization, lipogenesis and anabolic output. In response to growth factors, mTORC2 phosphorylates and activates AGC protein kinase family members, including AKT (AKT1, AKT2 and AKT3), PKC (PRKCA, PRKCB and PRKCE) and SGK1. In contrast to mTORC1, mTORC2 is nutrient-insensitive. mTORC2 plays a critical role in AKT1 activation by mediating phosphorylation of different sites depending on the context, such as 'Thr-450', 'Ser-473', 'Ser-477' or 'Thr-479', facilitating the phosphorylation of the activation loop of AKT1 on 'Thr-308' by PDPK1/PDK1 which is a prerequisite for full activation. mTORC2 also regulates the phosphorylation of SGK1 at 'Ser-422'. mTORC2 may regulate the actin cytoskeleton, through phosphorylation of PRKCA, PXN and activation of the Rho-type guanine nucleotide exchange factors RHOA and RAC1A or RAC1B. The mTORC2 complex also phosphorylates various proteins involved in insulin signaling, such as FBXW8 and IGF2BP1. May also regulate insulin signaling by acting as a tyrosine protein kinase that catalyzes phosphorylation of IGF1R and INSR. Regulates osteoclastogenesis by adjusting the expression of CEBPB isoforms. Plays an important regulatory role in the circadian clock function; regulates period length and rhythm amplitude of the suprachiasmatic nucleus (SCN) and liver clocks. This chain is Serine/threonine-protein kinase mTOR, found in Mus musculus (Mouse).